A 606-amino-acid chain; its full sequence is Membrane protein insertase YidC (606 aa).

The helical transmembrane segment at 8–28 (LILATALSFLVILVWFLLFPP) threads the bilayer. Low complexity predominate over residues 59–78 (TEAAPGAAPQTAATPTENAP). A disordered region spans residues 59-79 (TEAAPGAAPQTAATPTENAPR). Helical transmembrane passes span 378–398 (MGVAIIVLTLLIKALLLPLAW), 448–468 (LPILLQIPIFFSLYKVIFVTI), 506–526 (SILALIFIGILPLLLGISMWL), and 542–562 (IFAWLPWVFMFMLGTFASGLI).

This sequence belongs to the OXA1/ALB3/YidC family. Type 1 subfamily. In terms of assembly, interacts with the Sec translocase complex via SecD. Specifically interacts with transmembrane segments of nascent integral membrane proteins during membrane integration.

It is found in the cell inner membrane. In terms of biological role, required for the insertion and/or proper folding and/or complex formation of integral membrane proteins into the membrane. Involved in integration of membrane proteins that insert both dependently and independently of the Sec translocase complex, as well as at least some lipoproteins. Aids folding of multispanning membrane proteins. This Dinoroseobacter shibae (strain DSM 16493 / NCIMB 14021 / DFL 12) protein is Membrane protein insertase YidC.